The primary structure comprises 473 residues: Ras-GEF domain-containing family member 1B (473 aa).

The N-terminal Ras-GEF domain maps to 34-164 (HDNNLLSGSL…QMMQCLIRKL (131 aa)). The Ras-GEF domain maps to 204 to 452 (NDPYTLAQQL…LYLASYESEG (249 aa)).

Interacts with Ras family proteins. Interacts with CCDC124 during cytokinesis.

The protein resides in the early endosome. It is found in the late endosome. Its subcellular location is the midbody. Its function is as follows. Guanine nucleotide exchange factor (GEF) with specificity for RAP2A, it doesn't seems to activate other Ras family proteins (in vitro). In Homo sapiens (Human), this protein is Ras-GEF domain-containing family member 1B (RASGEF1B).